A 306-amino-acid polypeptide reads, in one-letter code: Cathepsin Z (306 aa).

The N-terminal stretch at 1–20 is a signal peptide; sequence MLAILFNFFLLTYFTNITLG. A propeptide spans 21-65 (activation peptide); the sequence is KVGKSIDLDTRNGYNVHGCYKQTGKIYAHKTYPRQYEAENYNFDD. 5 disulfides stabilise this stretch: C39–C96, C93–C136, C130–C168, C158–C174, and C177–C182. C96 is an active-site residue. Residue N187 is glycosylated (N-linked (GlcNAc...) asparagine). Residues C217 and C299 are joined by a disulfide bond. Active-site residues include H243 and N265. N286 carries N-linked (GlcNAc...) asparagine glycosylation.

It belongs to the peptidase C1 family.

The protein localises to the cytoplasmic vesicle. Its subcellular location is the secretory vesicle. The protein resides in the secreted. It catalyses the reaction Release of C-terminal amino acid residues with broad specificity, but lacks action on C-terminal proline. Shows weak endopeptidase activity.. Its activity is regulated as follows. The disulfide bridge formed between Cys-39 in the propeptide and the active site residue Cys-96 may prevent activation of the zymogen through formation of a reversible covalent bond with the active site residue. Exhibits carboxy-monopeptidase as well as carboxy-dipeptidase activity. Plays an essential role in molting, a process during larval stages in which a new cuticle is formed and the old cuticle is shed. Required for the degradation and shedding of the old cuticle. The polypeptide is Cathepsin Z (Onchocerca volvulus).